The sequence spans 172 residues: Adenylate kinase isoenzyme 6 (172 aa).

Residues G13, G15, K16, T17, and T18 each coordinate ATP. The tract at residues N33 to L56 is NMPbind. Positions T108–D118 are LID. R109 and K148 together coordinate ATP.

The protein belongs to the adenylate kinase family. AK6 subfamily. In terms of assembly, monomer and homodimer. Interacts with small ribosomal subunit protein uS11. Not a structural component of 43S pre-ribosomes, but transiently interacts with them by binding to uS11. Interacts with COIL (via C-terminus).

It is found in the cytoplasm. Its subcellular location is the nucleus. The protein localises to the nucleoplasm. It localises to the cajal body. It catalyses the reaction AMP + ATP = 2 ADP. It carries out the reaction ATP + H2O = ADP + phosphate + H(+). Its function is as follows. Broad-specificity nucleoside monophosphate (NMP) kinase that catalyzes the reversible transfer of the terminal phosphate group between nucleoside triphosphates and monophosphates. Also has ATPase activity. Involved in the late cytoplasmic maturation steps of the 40S ribosomal particles, specifically 18S rRNA maturation. While NMP activity is not required for ribosome maturation, ATPase activity is. Associates transiently with small ribosomal subunit protein uS11. ATP hydrolysis breaks the interaction with uS11. May temporarily remove uS11 from the ribosome to enable a conformational change of the ribosomal RNA that is needed for the final maturation step of the small ribosomal subunit. Its NMP activity may have a role in nuclear energy homeostasis. May be involved in regulation of Cajal body (CB) formation. This is Adenylate kinase isoenzyme 6 from Oryctolagus cuniculus (Rabbit).